Consider the following 285-residue polypeptide: Glutamate racemase (285 aa).

Residues 28–29 (DS) and 60–61 (YG) each bind substrate. Residue Cys92 is the Proton donor/acceptor of the active site. Residue 93 to 94 (NT) participates in substrate binding. Catalysis depends on Cys204, which acts as the Proton donor/acceptor. 205–206 (TH) contributes to the substrate binding site.

Belongs to the aspartate/glutamate racemases family.

The enzyme catalyses L-glutamate = D-glutamate. It participates in cell wall biogenesis; peptidoglycan biosynthesis. Its function is as follows. Provides the (R)-glutamate required for cell wall biosynthesis. In Escherichia coli O9:H4 (strain HS), this protein is Glutamate racemase.